The chain runs to 213 residues: MKPYQRQFIEFALNKQVLKFGEFTLKSGRQSPYFFNAGLFNTGRDLALLGRFYAEALVDSGVDFDLLFGPAYKGIPIATTTAVALAEHHERDVPYCFNRKEAKDHGEGGNLVGSPLQGRVMLVDDVITAGTAIRESMEIIQANGATLAGVMISLDRQERGRGELSAIQEVERDYGCQVIAIITLNDLIAYLAEKPEMANHLAAVEAYRQQYGV.

Position 26 (K26) interacts with 5-phospho-alpha-D-ribose 1-diphosphate. 34-35 lines the orotate pocket; sequence FF. 5-phospho-alpha-D-ribose 1-diphosphate is bound by residues 72 to 73, R99, K100, K103, H105, and 124 to 132; these read YK and DDVITAGTA. Orotate contacts are provided by T128 and R156.

Belongs to the purine/pyrimidine phosphoribosyltransferase family. PyrE subfamily. Homodimer. The cofactor is Mg(2+).

The catalysed reaction is orotidine 5'-phosphate + diphosphate = orotate + 5-phospho-alpha-D-ribose 1-diphosphate. The protein operates within pyrimidine metabolism; UMP biosynthesis via de novo pathway; UMP from orotate: step 1/2. In terms of biological role, catalyzes the transfer of a ribosyl phosphate group from 5-phosphoribose 1-diphosphate to orotate, leading to the formation of orotidine monophosphate (OMP). The polypeptide is Orotate phosphoribosyltransferase (Cronobacter sakazakii (strain ATCC BAA-894) (Enterobacter sakazakii)).